The primary structure comprises 207 residues: Glycerol-3-phosphate acyltransferase (207 aa).

5 helical membrane passes run 4-24 (VVAT…SFAV), 58-78 (ILTL…AQWL), 86-106 (ETGI…PVFH), 120-140 (ILLA…LIIA), and 162-182 (VLMN…VLLI).

Belongs to the PlsY family. Probably interacts with PlsX.

It is found in the cell inner membrane. The enzyme catalyses an acyl phosphate + sn-glycerol 3-phosphate = a 1-acyl-sn-glycero-3-phosphate + phosphate. The protein operates within lipid metabolism; phospholipid metabolism. Functionally, catalyzes the transfer of an acyl group from acyl-phosphate (acyl-PO(4)) to glycerol-3-phosphate (G3P) to form lysophosphatidic acid (LPA). This enzyme utilizes acyl-phosphate as fatty acyl donor, but not acyl-CoA or acyl-ACP. The protein is Glycerol-3-phosphate acyltransferase of Ralstonia pickettii (strain 12J).